A 160-amino-acid polypeptide reads, in one-letter code: UPF0178 protein PLES_56411 (160 aa).

Belongs to the UPF0178 family.

This Pseudomonas aeruginosa (strain LESB58) protein is UPF0178 protein PLES_56411.